The primary structure comprises 547 residues: Rho GTPase-activating protein 36 (547 aa).

The first 40 residues, 1 to 40 (MGGCIPFLKAARALCPRIMPPLLLLSAFIFLVSVLGGAPG), serve as a signal peptide directing secretion. Residues 226–426 (MSLNPIAKQI…AMIDNWDVLF (201 aa)) enclose the Rho-GAP domain. The tract at residues 485–547 (AVLAQSKPSD…AKTGVSYFFP (63 aa)) is disordered. The segment covering 524–539 (EQDRPLLRVPREKEAK) has biased composition (basic and acidic residues).

May interacts (via the Rho-GAP domain) with the active form of RAC1. Detected in the outer root sheath of hair follicles at the level of the stem cell bulge, during the anagen and telogen phases of hair growth (at protein level).

Functionally, GTPase activator for the Rho-type GTPases by converting them to an inactive GDP-bound state. This is Rho GTPase-activating protein 36 (ARHGAP36) from Homo sapiens (Human).